The chain runs to 153 residues: Probable phospholipase A2 homolog 2 (153 aa).

The signal sequence occupies residues 1 to 25 (MRFFLKLAPRCSVLLLLLLVTASRG). Cystine bridges form between C42–C70, C46–C76, C51–C123, C63–C83, C82–C109, and C89–C102. Ca(2+) contacts are provided by Y62, G64, and Y67. H86 is an active-site residue. D87 contributes to the Ca(2+) binding site.

The protein belongs to the phospholipase A2 family. Ca(2+) serves as cofactor.

It localises to the secreted. It carries out the reaction a 1,2-diacyl-sn-glycero-3-phosphocholine + H2O = a 1-acyl-sn-glycero-3-phosphocholine + a fatty acid + H(+). Functionally, PA2 catalyzes the calcium-dependent hydrolysis of the 2-acyl groups in 3-sn-phosphoglycerides. Releases lysophospholipids (LPLs) and free fatty acids (FFAs) from membrane phospholipids in response to hormones and other external stimuli. The sequence is that of Probable phospholipase A2 homolog 2 (PLA2-II) from Oryza sativa subsp. japonica (Rice).